We begin with the raw amino-acid sequence, 399 residues long: Enolase (399 aa).

Gln-149 is a (2R)-2-phosphoglycerate binding site. The active-site Proton donor is Glu-191. Mg(2+) is bound by residues Asp-227, Glu-268, and Asp-293. Lys-318, Arg-347, Ser-348, and Lys-369 together coordinate (2R)-2-phosphoglycerate. The active-site Proton acceptor is Lys-318.

The protein belongs to the enolase family. Requires Mg(2+) as cofactor.

It localises to the cytoplasm. Its subcellular location is the secreted. The protein resides in the cell surface. It carries out the reaction (2R)-2-phosphoglycerate = phosphoenolpyruvate + H2O. The protein operates within carbohydrate degradation; glycolysis; pyruvate from D-glyceraldehyde 3-phosphate: step 4/5. Catalyzes the reversible conversion of 2-phosphoglycerate (2-PG) into phosphoenolpyruvate (PEP). It is essential for the degradation of carbohydrates via glycolysis. This Archaeoglobus fulgidus (strain ATCC 49558 / DSM 4304 / JCM 9628 / NBRC 100126 / VC-16) protein is Enolase.